The primary structure comprises 525 residues: Glutamate--cysteine ligase (525 aa).

It belongs to the glutamate--cysteine ligase type 1 family. Type 1 subfamily.

The enzyme catalyses L-cysteine + L-glutamate + ATP = gamma-L-glutamyl-L-cysteine + ADP + phosphate + H(+). The protein operates within sulfur metabolism; glutathione biosynthesis; glutathione from L-cysteine and L-glutamate: step 1/2. This is Glutamate--cysteine ligase from Vibrio vulnificus (strain YJ016).